We begin with the raw amino-acid sequence, 418 residues long: Aspartate aminotransferase 1 (418 aa).

Residue Lys264 is modified to N6-(pyridoxal phosphate)lysine.

The protein belongs to the class-I pyridoxal-phosphate-dependent aminotransferase family. Homodimer. It depends on pyridoxal 5'-phosphate as a cofactor. In terms of tissue distribution, nodules, roots, stems and leaves, in decreasing order of aspartate aminotransferase 1 concentration. Is the predominant aspartate aminotransferase isoenzyme in roots.

The protein resides in the cytoplasm. It catalyses the reaction L-aspartate + 2-oxoglutarate = oxaloacetate + L-glutamate. Its function is as follows. Important for the metabolism of amino acids and Krebs-cycle related organic acids. In plants, it is involved in nitrogen metabolism and in aspects of carbon and energy metabolism. The protein is Aspartate aminotransferase 1 (AAT-1) of Medicago sativa (Alfalfa).